A 305-amino-acid polypeptide reads, in one-letter code: Protoheme IX farnesyltransferase (305 aa).

Helical transmembrane passes span 31–51 (VMSL…YSVH), 52–72 (PFIA…AGAI), 96–118 (VIES…FFMA), 123–145 (LLAS…IWLK), 151–171 (NIVI…AAVS), 179–199 (IILF…LALF), 225–245 (ILIY…IGMN), 247–267 (FIYL…AGSL), and 281–301 (FAYS…TNTI).

This sequence belongs to the UbiA prenyltransferase family. Protoheme IX farnesyltransferase subfamily.

It is found in the cell inner membrane. The catalysed reaction is heme b + (2E,6E)-farnesyl diphosphate + H2O = Fe(II)-heme o + diphosphate. It functions in the pathway porphyrin-containing compound metabolism; heme O biosynthesis; heme O from protoheme: step 1/1. Its function is as follows. Converts heme B (protoheme IX) to heme O by substitution of the vinyl group on carbon 2 of heme B porphyrin ring with a hydroxyethyl farnesyl side group. In Rickettsia rickettsii (strain Iowa), this protein is Protoheme IX farnesyltransferase.